The primary structure comprises 974 residues: Translation initiation factor IF-2 (974 aa).

3 disordered regions span residues 67–86, 101–133, and 146–385; these read TRKH…ARTI, DVAE…RREA, and RQER…TFQA. Over residues 105–114 the composition is skewed to low complexity; that stretch reads GAEQGQAQVA. 2 stretches are compositionally biased toward basic and acidic residues: residues 121 to 133 and 146 to 181; these read ELKR…RREA and RQER…KRAA. Residues 182-197 show a composition bias toward low complexity; sequence AEAAAAQQAAAQQAAE. The span at 210 to 261 shows a compositional bias: basic and acidic residues; the sequence is EEARAAAERAAQREAAKKAEDAAREAADKARAEQEEIRKRREAAEAEARAIR. Residues 313 to 329 are compositionally biased toward low complexity; sequence PAGATPATTQAPAAGAG. Residues 358 to 371 are compositionally biased toward gly residues; the sequence is SSGGVDRGWRGGPK. Residues 474-643 enclose the tr-type G domain; the sequence is PRPPVVTVMG…LLQAEVLELK (170 aa). Positions 483–490 are G1; sequence GHVDHGKT. 483 to 490 lines the GTP pocket; it reads GHVDHGKT. Positions 508 to 512 are G2; that stretch reads GITQH. The interval 529–532 is G3; that stretch reads DTPG. GTP contacts are provided by residues 529 to 533 and 583 to 586; these read DTPGH and NKID. The tract at residues 583-586 is G4; sequence NKID. The tract at residues 619-621 is G5; that stretch reads SAK.

This sequence belongs to the TRAFAC class translation factor GTPase superfamily. Classic translation factor GTPase family. IF-2 subfamily.

The protein resides in the cytoplasm. One of the essential components for the initiation of protein synthesis. Protects formylmethionyl-tRNA from spontaneous hydrolysis and promotes its binding to the 30S ribosomal subunits. Also involved in the hydrolysis of GTP during the formation of the 70S ribosomal complex. The polypeptide is Translation initiation factor IF-2 (Burkholderia vietnamiensis (strain G4 / LMG 22486) (Burkholderia cepacia (strain R1808))).